Reading from the N-terminus, the 279-residue chain is Thymidylate synthase (279 aa).

Residue 141 to 142 coordinates dUMP; that stretch reads RR. C161 serves as the catalytic Nucleophile. Residues 181-184, N192, and 222-224 each bind dUMP; these read RSND and HIY. Residue D184 participates in (6R)-5,10-methylene-5,6,7,8-tetrahydrofolate binding. Position 278 (A278) interacts with (6R)-5,10-methylene-5,6,7,8-tetrahydrofolate.

Belongs to the thymidylate synthase family. Bacterial-type ThyA subfamily. Homodimer.

The protein resides in the cytoplasm. The catalysed reaction is dUMP + (6R)-5,10-methylene-5,6,7,8-tetrahydrofolate = 7,8-dihydrofolate + dTMP. It functions in the pathway pyrimidine metabolism; dTTP biosynthesis. Functionally, catalyzes the reductive methylation of 2'-deoxyuridine-5'-monophosphate (dUMP) to 2'-deoxythymidine-5'-monophosphate (dTMP) while utilizing 5,10-methylenetetrahydrofolate (mTHF) as the methyl donor and reductant in the reaction, yielding dihydrofolate (DHF) as a by-product. This enzymatic reaction provides an intracellular de novo source of dTMP, an essential precursor for DNA biosynthesis. This is Thymidylate synthase from Bacillus licheniformis (strain ATCC 14580 / DSM 13 / JCM 2505 / CCUG 7422 / NBRC 12200 / NCIMB 9375 / NCTC 10341 / NRRL NRS-1264 / Gibson 46).